Consider the following 1438-residue polypeptide: DNA polymerase III PolC-type (1438 aa).

The Exonuclease domain occupies 422-578 (YVVFDVETTG…YDTEATAYIF (157 aa)).

It belongs to the DNA polymerase type-C family. PolC subfamily.

It localises to the cytoplasm. It carries out the reaction DNA(n) + a 2'-deoxyribonucleoside 5'-triphosphate = DNA(n+1) + diphosphate. In terms of biological role, required for replicative DNA synthesis. This DNA polymerase also exhibits 3' to 5' exonuclease activity. The polypeptide is DNA polymerase III PolC-type (Staphylococcus aureus (strain MRSA252)).